A 406-amino-acid polypeptide reads, in one-letter code: Succinyl-diaminopimelate desuccinylase (406 aa).

His-95 contributes to the Zn(2+) binding site. Residue Asp-97 is part of the active site. Residue Asp-128 participates in Zn(2+) binding. Residue Glu-162 is the Proton acceptor of the active site. Zn(2+) is bound by residues Glu-163, Glu-191, and His-377.

This sequence belongs to the peptidase M20A family. DapE subfamily. As to quaternary structure, homodimer. It depends on Zn(2+) as a cofactor. Co(2+) is required as a cofactor.

The enzyme catalyses N-succinyl-(2S,6S)-2,6-diaminopimelate + H2O = (2S,6S)-2,6-diaminopimelate + succinate. It functions in the pathway amino-acid biosynthesis; L-lysine biosynthesis via DAP pathway; LL-2,6-diaminopimelate from (S)-tetrahydrodipicolinate (succinylase route): step 3/3. In terms of biological role, catalyzes the hydrolysis of N-succinyl-L,L-diaminopimelic acid (SDAP), forming succinate and LL-2,6-diaminopimelate (DAP), an intermediate involved in the bacterial biosynthesis of lysine and meso-diaminopimelic acid, an essential component of bacterial cell walls. In Polaromonas naphthalenivorans (strain CJ2), this protein is Succinyl-diaminopimelate desuccinylase.